Reading from the N-terminus, the 381-residue chain is UDP-N-acetylglucosamine--N-acetylmuramyl-(pentapeptide) pyrophosphoryl-undecaprenol N-acetylglucosamine transferase (381 aa).

Residues 10 to 12 (TGG), Asn124, Arg165, Ser207, Ile263, and Gln308 contribute to the UDP-N-acetyl-alpha-D-glucosamine site.

It belongs to the glycosyltransferase 28 family. MurG subfamily.

The protein localises to the cell inner membrane. It catalyses the reaction di-trans,octa-cis-undecaprenyl diphospho-N-acetyl-alpha-D-muramoyl-L-alanyl-D-glutamyl-meso-2,6-diaminopimeloyl-D-alanyl-D-alanine + UDP-N-acetyl-alpha-D-glucosamine = di-trans,octa-cis-undecaprenyl diphospho-[N-acetyl-alpha-D-glucosaminyl-(1-&gt;4)]-N-acetyl-alpha-D-muramoyl-L-alanyl-D-glutamyl-meso-2,6-diaminopimeloyl-D-alanyl-D-alanine + UDP + H(+). The protein operates within cell wall biogenesis; peptidoglycan biosynthesis. Functionally, cell wall formation. Catalyzes the transfer of a GlcNAc subunit on undecaprenyl-pyrophosphoryl-MurNAc-pentapeptide (lipid intermediate I) to form undecaprenyl-pyrophosphoryl-MurNAc-(pentapeptide)GlcNAc (lipid intermediate II). This is UDP-N-acetylglucosamine--N-acetylmuramyl-(pentapeptide) pyrophosphoryl-undecaprenol N-acetylglucosamine transferase from Trichlorobacter lovleyi (strain ATCC BAA-1151 / DSM 17278 / SZ) (Geobacter lovleyi).